The following is a 126-amino-acid chain: Protein ApaG (126 aa).

Positions 2–126 (SALDNSIRVE…FRLATPGLLH (125 aa)) constitute an ApaG domain.

The polypeptide is Protein ApaG (Shewanella oneidensis (strain ATCC 700550 / JCM 31522 / CIP 106686 / LMG 19005 / NCIMB 14063 / MR-1)).